We begin with the raw amino-acid sequence, 55 residues long: uncharacterized protein (55 aa).

Residues Val-7–Ile-24 form a helical membrane-spanning segment.

It is found in the membrane. This is an uncharacterized protein from Escherichia coli O157:H7.